A 1259-amino-acid chain; its full sequence is Receptor tyrosine-protein kinase erbB-2 (1259 aa).

The N-terminal stretch at 1–22 (MELAAWCRWGLLLALLPSGAAG) is a signal peptide. Topologically, residues 23–653 (TQVCTGTDMK…EQRASPVTSI (631 aa)) are extracellular. C26 and C53 are oxidised to a cystine. Residue N68 is glycosylated (N-linked (GlcNAc...) asparagine). Intrachain disulfides connect C162-C192, C195-C204, C199-C212, C220-C227, C224-C235, C236-C244, C240-C252, C255-C264, C268-C295, C299-C311, C315-C331, C334-C338, and C342-C367. T182 is subject to Phosphothreonine. N259 carries N-linked (GlcNAc...) asparagine glycosylation. N-linked (GlcNAc...) asparagine glycosylation is present at N421. 3 disulfide bridges follow: C475–C504, C511–C519, and C514–C527. The N-linked (GlcNAc...) asparagine glycan is linked to N529. Intrachain disulfides connect C530-C539, C543-C559, C562-C575, C566-C583, C586-C595, C599-C622, C625-C633, and C629-C641. A glycan (N-linked (GlcNAc...) asparagine) is linked at N570. The N-linked (GlcNAc...) asparagine glycan is linked to N628. A helical transmembrane segment spans residues 654–674 (IAAVVGILLAVVVGLVLGILI). The segment at 675–688 (KRRRQKIRKYTMRR) is required for interaction with KPNB1 and EEA1. Positions 675–688 (KRRRQKIRKYTMRR) match the Nuclear localization signal motif. Over 675-1259 (KRRRQKIRKY…PEYLGLDVPV (585 aa)) the chain is Cytoplasmic. The region spanning 719-986 (LRKVKVLGSG…RMARDPQRFV (268 aa)) is the Protein kinase domain. ATP contacts are provided by residues 725 to 733 (LGSGAFGTV) and K752. D844 functions as the Proton acceptor in the catalytic mechanism. Y876 carries the phosphotyrosine modification. Residues 1027–1183 (QGFFCPEPTP…PKTLSPGKNG (157 aa)) form a disordered region. 3 positions are modified to phosphoserine: S1077, S1082, and S1106. Y1111 is modified (phosphotyrosine). Y1138 is modified (phosphotyrosine; by autocatalysis). The segment covering 1145–1160 (WPQPPLALEGPLPPSR) has biased composition (pro residues). A Phosphothreonine modification is found at T1165. Residues 1199–1201 (EYL) are interaction with PIK3C2B. Y1200 bears the Phosphotyrosine mark. The disordered stretch occupies residues 1203–1259 (PRGRAAPQPHPPPAFSPAFDNLYYWDQDPSERGSPPSTFEGTPTAENPEYLGLDVPV). The segment covering 1237 to 1247 (PPSTFEGTPTA) has biased composition (polar residues). Y1252 is subject to Phosphotyrosine; by autocatalysis.

It belongs to the protein kinase superfamily. Tyr protein kinase family. EGF receptor subfamily. As to quaternary structure, homodimer. Heterodimer with EGFR, ERBB3 and ERBB4. Part of a complex with EGFR and either PIK3C2A or PIK3C2B. May interact with PIK3C2B when phosphorylated on Tyr-1200. Interacts with PRKCABP and PLXNB1. Interacts (when phosphorylated on Tyr-1252) with MEMO1. Interacts with MUC1. Interacts (when phosphorylated on Tyr-1138) with GRB7 (via SH2 domain). Interacts (when phosphorylated on Tyr-1252) with ERBIN. Interacts with SRC, KPNB1, PTK6, RANBP2, EEA1, CRM1, CLTC, RPA194, MYOC and ACTB. Interacts (preferentially with the tyrosine phosphorylated form) with CPNE3; this interaction occurs at the cell membrane and is increased in a growth factor heregulin-dependent manner. Interacts with HSP90AA1 and HSP90AB1 in an ATP-dependent manner; the interaction suppresses ERBB2 kinase activity. Interacts with SORL1; this interaction regulates ERBB2 subcellular distribution by promoting its recycling after internalization from endosomes back to the plasma membrane, hence stimulates ERBB2-mediated signaling. Interacts with SH3BGRL. Interacts with ROR1. Post-translationally, autophosphorylated. Autophosphorylation occurs in trans, i.e. one subunit of the dimeric receptor phosphorylates tyrosine residues on the other subunit. Ligand-binding increases phosphorylation on tyrosine residues. Signaling via SEMA4C promotes phosphorylation at Tyr-1252. Dephosphorylated by PTPN12.

Its subcellular location is the cell membrane. It localises to the cell projection. The protein localises to the ruffle membrane. It is found in the early endosome. The protein resides in the cytoplasm. Its subcellular location is the perinuclear region. It localises to the nucleus. It catalyses the reaction L-tyrosyl-[protein] + ATP = O-phospho-L-tyrosyl-[protein] + ADP + H(+). In terms of biological role, protein tyrosine kinase that is part of several cell surface receptor complexes, but that apparently needs a coreceptor for ligand binding. Essential component of a neuregulin-receptor complex, although neuregulins do not interact with it alone. GP30 is a potential ligand for this receptor. Regulates outgrowth and stabilization of peripheral microtubules (MTs). Upon ERBB2 activation, the MEMO1-RHOA-DIAPH1 signaling pathway elicits the phosphorylation and thus the inhibition of GSK3B at cell membrane. This prevents the phosphorylation of APC and CLASP2, allowing its association with the cell membrane. In turn, membrane-bound APC allows the localization of MACF1 to the cell membrane, which is required for microtubule capture and stabilization. Functionally, in the nucleus is involved in transcriptional regulation. Associates with the 5'-TCAAATTC-3' sequence in the PTGS2/COX-2 promoter and activates its transcription. Implicated in transcriptional activation of CDKN1A; the function involves STAT3 and SRC. Involved in the transcription of rRNA genes by RNA Pol I and enhances protein synthesis and cell growth. This is Receptor tyrosine-protein kinase erbB-2 (ERBB2) from Canis lupus familiaris (Dog).